We begin with the raw amino-acid sequence, 510 residues long: NAD(P)H-quinone oxidoreductase subunit 2 B, chloroplastic (510 aa).

The next 13 membrane-spanning stretches (helical) occupy residues 24 to 44, 57 to 77, 99 to 119, 124 to 144, 149 to 169, 183 to 203, 227 to 247, 295 to 315, 323 to 343, 354 to 374, 395 to 415, 418 to 438, and 484 to 504; these read LLLF…GLIL, IPWL…ALLF, IFQF…VEYI, MAIT…MFLC, LITI…LSGY, YLLM…WLYG, PGIS…LSLA, WHLL…LIAI, MLAY…IVGD, YMLF…LFGL, ALSL…AGFF, LHLF…IGLL, and MIVC…IIAI.

This sequence belongs to the complex I subunit 2 family. NDH is composed of at least 16 different subunits, 5 of which are encoded in the nucleus.

The protein localises to the plastid. The protein resides in the chloroplast thylakoid membrane. It catalyses the reaction a plastoquinone + NADH + (n+1) H(+)(in) = a plastoquinol + NAD(+) + n H(+)(out). It carries out the reaction a plastoquinone + NADPH + (n+1) H(+)(in) = a plastoquinol + NADP(+) + n H(+)(out). In terms of biological role, NDH shuttles electrons from NAD(P)H:plastoquinone, via FMN and iron-sulfur (Fe-S) centers, to quinones in the photosynthetic chain and possibly in a chloroplast respiratory chain. The immediate electron acceptor for the enzyme in this species is believed to be plastoquinone. Couples the redox reaction to proton translocation, and thus conserves the redox energy in a proton gradient. This chain is NAD(P)H-quinone oxidoreductase subunit 2 B, chloroplastic, found in Citrus sinensis (Sweet orange).